We begin with the raw amino-acid sequence, 209 residues long: PRA1 family protein A2 (209 aa).

The next 4 membrane-spanning stretches (helical) occupy residues 51–72, 76–98, 142–162, and 163–183; these read LYYY…ALVT, ALVG…AASF, RWVF…SSCG, and LLWV…HASI.

This sequence belongs to the PRA1 family.

The protein resides in the endosome membrane. May be involved in both secretory and endocytic intracellular trafficking in the endosomal/prevacuolar compartments. In Arabidopsis thaliana (Mouse-ear cress), this protein is PRA1 family protein A2 (PRA1A2).